A 403-amino-acid polypeptide reads, in one-letter code: Chalcone synthase 3 (403 aa).

The active site involves C170.

The protein belongs to the thiolase-like superfamily. Chalcone/stilbene synthases family.

The enzyme catalyses (E)-4-coumaroyl-CoA + 3 malonyl-CoA + 3 H(+) = 2',4,4',6'-tetrahydroxychalcone + 3 CO2 + 4 CoA. The protein operates within secondary metabolite biosynthesis; flavonoid biosynthesis. Functionally, the primary product of this enzyme is 4,2',4',6'-tetrahydroxychalcone (also termed naringenin-chalcone or chalcone) which can under specific conditions spontaneously isomerize into naringenin. The protein is Chalcone synthase 3 (CHS3) of Gerbera hybrida (Daisy).